The following is a 652-amino-acid chain: Carboxypeptidase S1 homolog A (652 aa).

A signal peptide spans 1–19; it reads MRLAASIAVALPVIGAASA. The cysteines at positions 50 and 121 are disulfide-linked. N-linked (GlcNAc...) asparagine glycans are attached at residues Asn-77, Asn-132, Asn-161, Asn-168, Asn-184, and Asn-202. Residue Ser-238 is part of the active site. Asn-260, Asn-299, Asn-347, and Asn-410 each carry an N-linked (GlcNAc...) asparagine glycan. Intrachain disulfides connect Cys-325–Cys-361 and Cys-332–Cys-354. Residue Asp-458 is part of the active site. Residue Cys-461 coordinates substrate. Residues Asn-474, Asn-492, and Asn-505 are each glycosylated (N-linked (GlcNAc...) asparagine). Residue His-516 is part of the active site. Residue Glu-517 coordinates substrate. N-linked (GlcNAc...) asparagine glycosylation occurs at Asn-594. The disordered stretch occupies residues 608–628; that stretch reads AASKGNPPPTTTSSPTASPTA. Positions 618-628 are enriched in low complexity; it reads TTSSPTASPTA. A lipid anchor (GPI-anchor amidated glycine) is attached at Gly-629. Positions 630 to 652 are cleaved as a propeptide — removed in mature form; it reads SAMLKAPVAMLAISALTVLAFYL.

It belongs to the peptidase S10 family.

It localises to the cell membrane. The catalysed reaction is Preferential release of a C-terminal arginine or lysine residue.. Extracellular serine carboxypeptidase that contributes to pathogenicity. This Trichophyton verrucosum (strain HKI 0517) protein is Carboxypeptidase S1 homolog A (SCPA).